The primary structure comprises 715 residues: Palmitoyltransferase ZDHHC5 (715 aa).

The Cytoplasmic portion of the chain corresponds to 1–13; sequence MPAESGKRFKPSK. Residues 14–34 traverse the membrane as a helical segment; sequence YVPVSAAAIFLVGATTLFFAF. Over 35 to 52 the chain is Extracellular; the sequence is TCPGLSLNVSPAVPIYNA. Residues 53–73 traverse the membrane as a helical segment; that stretch reads IMFLFVLANFSMATFMDPGIF. Over 74 to 148 the chain is Cytoplasmic; that stretch reads PRAEEDEDKE…NCIGRRNYRY (75 aa). The residue at position 91 (Y91) is a Phosphotyrosine. The DHHC domain occupies 104–154; sequence KWCATCRFYRPPRCSHCSVCDNCVEEFDHHCPWVNNCIGRRNYRYFFLFLL. The active-site S-palmitoyl cysteine intermediate is the C134. The chain crosses the membrane as a helical span at residues 149–169; the sequence is FFLFLLSLTAHIMGVFGFGLL. Topologically, residues 170–191 are extracellular; it reads YVLYHIEELSGVRTAVTMAVMC. The helical transmembrane segment at 192–212 threads the bilayer; the sequence is VAGLFFIPVAGLTGFHVVLVA. The Cytoplasmic segment spans residues 213–715; the sequence is RGRTTNEQVT…VGGTTYEISV (503 aa). At S247 the chain carries Phosphoserine. The segment at 289–715 is disordered; that stretch reads GELRRTKSKG…VGGTTYEISV (427 aa). Residue T294 is modified to Phosphothreonine. 2 positions are modified to phosphoserine: S296 and S299. T303 bears the Phosphothreonine mark. The residue at position 345 (S345) is a Phosphoserine. Residues T348 and T350 each carry the phosphothreonine modification. Over residues 359 to 373 the composition is skewed to low complexity; the sequence is SSSSTSAAMPHSSSA. A phosphoserine mark is found at S380, S398, S406, and S409. At T411 the chain carries Phosphothreonine. S415, S425, S429, and S432 each carry phosphoserine. The segment covering 422–432 has biased composition (low complexity); that stretch reads SSGSRSSSLKS. A Phosphothreonine modification is found at T436. A compositionally biased stretch (polar residues) spans 442–478; the sequence is QLQSIRSEGTTSTSYKSLANQTRNGSLSYDSLLTPSD. Residues S529 and S554 each carry the phosphoserine modification. The segment covering 581–597 has biased composition (low complexity); that stretch reads PRTSSSSDDSKRSPLSK. Omega-N-methylarginine is present on R617. At S621 the chain carries Phosphoserine. Position 659 is a phosphothreonine (T659). Over residues 666-677 the composition is skewed to polar residues; the sequence is LKTTYSKSNGQP. A phosphoserine mark is found at S684 and S694. R697 carries the post-translational modification Omega-N-methylarginine.

Belongs to the DHHC palmitoyltransferase family. ERF2/ZDHHC9 subfamily. In terms of processing, phosphorylation regulates association with endocytic proteins and its subcellular localization. Phosphorylation by LYN during fatty acid uptake leads to inactivation of the activity. Autopalmitoylated. Palmitoylation of the C-terminal tail regulates stimulation-dependent plasma membrane motility. In terms of tissue distribution, highly enriched in brain, detectable in liver and heart, and undetectable in most other tissues.

It is found in the cell membrane. It catalyses the reaction L-cysteinyl-[protein] + hexadecanoyl-CoA = S-hexadecanoyl-L-cysteinyl-[protein] + CoA. Palmitoyltransferase that catalyzes the addition of palmitate onto various protein substrates such as CTNND2, CD36, GSDMD, NLRP3, NOD1, NOD2, STAT3 and S1PR1 thus plays a role in various biological processes including cell adhesion, inflammation, fatty acid uptake, bacterial sensing or cardiac functions. Plays an important role in the regulation of synapse efficacy by mediating palmitoylation of delta-catenin/CTNND2, thereby increasing synaptic delivery and surface stabilization of alpha-amino-3-hydroxy-5-methyl-4-isoxazole propionic acid receptors (AMPARs). Under basal conditions, remains at the synaptic membrane through FYN-mediated phosphorylation that prevents association with endocytic proteins. Neuronal activity enhances the internalization and trafficking of DHHC5 from spines to dendritic shafts where it palmitoylates delta-catenin/CTNND2. Regulates cell adhesion at the plasma membrane by palmitoylating GOLGA7B and DSG2. Plays a role in innate immune response by mediating the palmitoylation of NOD1 and NOD2 and their proper recruitment to the bacterial entry site and phagosomes. Also participates in fatty acid uptake by palmitoylating CD36 and thereby targeting it to the plasma membrane. Upon binding of fatty acids to CD36, gets phosphorylated by LYN leading to inactivation and subsequent CD36 caveolar endocytosis. Controls oligodendrocyte development by catalyzing STAT3 palmitoylation. Acts as a regulator of inflammatory response by mediating palmitoylation of NLRP3 and GSDMD. Palmitoylates NLRP3 to promote inflammasome assembly and activation. Activates pyroptosis by catalyzing palmitoylation of gasdermin-D (GSDMD), thereby promoting membrane translocation and pore formation of GSDMD. The polypeptide is Palmitoyltransferase ZDHHC5 (Zdhhc5) (Mus musculus (Mouse)).